Here is a 354-residue protein sequence, read N- to C-terminus: Virulence plasmid protein pGP2-D (354 aa).

The sequence is that of Virulence plasmid protein pGP2-D from Chlamydia trachomatis serovar L2 (strain ATCC VR-902B / DSM 19102 / 434/Bu).